The sequence spans 487 residues: (S)-N-methylcoclaurine 3'-hydroxylase isozyme 1 (487 aa).

The helical transmembrane segment at 4–24 threads the bilayer; that stretch reads TVALIAVIISSILYLLFGGSG. Cysteine 429 is a binding site for heme.

It belongs to the cytochrome P450 family. Heme serves as cofactor.

It is found in the endoplasmic reticulum membrane. It localises to the microsome membrane. It catalyses the reaction (S)-N-methylcoclaurine + reduced [NADPH--hemoprotein reductase] + O2 = (S)-3'-hydroxy-N-methylcoclaurine + oxidized [NADPH--hemoprotein reductase] + H2O + H(+). The protein operates within alkaloid biosynthesis; (S)-reticuline biosynthesis; (S)-reticuline from (S)-norcoclaurine: step 3/4. Functionally, 3'-hydroxylation of (S)-N-methylcoclaurine. The chain is (S)-N-methylcoclaurine 3'-hydroxylase isozyme 1 (CYP80B1) from Eschscholzia californica (California poppy).